Here is a 416-residue protein sequence, read N- to C-terminus: Solute carrier family 25 member 46 (416 aa).

Residues 1 to 13 (MQPRRPDRFDGLE) are compositionally biased toward basic and acidic residues. The tract at residues 1 to 91 (MQPRRPDRFD…GEESSSSSSG (91 aa)) is disordered. Residues 37–49 (SFSSSGDLSQHWV) are compositionally biased toward polar residues. Residues 82–91 (GEESSSSSSG) are compositionally biased toward low complexity. A Solcar 1 repeat occupies 94 to 185 (HLNRFAGFGI…GMLSEFTHLP (92 aa)). 6 consecutive transmembrane segments (helical) span residues 101–121 (FGIG…CIVL), 161–181 (MGST…LSEF), 197–217 (IGGH…FYSA), 256–276 (LLPL…HYII), 312–332 (FPEL…LYPL), and 381–401 (LGFY…AIVL). A Solcar 2 repeat occupies 309–414 (EDYFPELIAN…KIIYSSVVQT (106 aa)).

Belongs to the mitochondrial carrier (TC 2.A.29) family.

The protein resides in the mitochondrion outer membrane. Functionally, may play a role in mitochondrial dynamics by controlling mitochondrial membrane fission. This is Solute carrier family 25 member 46 (slc25a46) from Xenopus tropicalis (Western clawed frog).